We begin with the raw amino-acid sequence, 318 residues long: Retinol dehydrogenase 5 (318 aa).

A helical membrane pass occupies residues 1–21 (MWLPLLLGALLWAVLWLLRDR). Residues 22–288 (QSLPASNAFV…TRYSPGWDAK (267 aa)) are Lumenal-facing. 32 to 56 (FITGCDSGFGRLLALQLDQRGFRVL) is an NADP(+) binding site. Residue Asn160 is glycosylated (N-linked (GlcNAc...) asparagine). Ser163 provides a ligand contact to substrate. Tyr175 acts as the Proton acceptor in catalysis. The helical transmembrane segment at 289–309 (LLWLPASYLPASLVDAVLTWV) threads the bilayer. Topologically, residues 310–318 (LPKPAQAVY) are cytoplasmic.

This sequence belongs to the short-chain dehydrogenases/reductases (SDR) family. In terms of assembly, homodimer. Widely expressed. In the eye, abundant in the retinal pigment epithelium.

It localises to the endoplasmic reticulum membrane. It carries out the reaction 11-cis-retinol + NAD(+) = 11-cis-retinal + NADH + H(+). The catalysed reaction is 9-cis-retinol + NAD(+) = 9-cis-retinal + NADH + H(+). The enzyme catalyses 13-cis-retinol + NAD(+) = 13-cis-retinal + NADH + H(+). It catalyses the reaction androsterone + NAD(+) = 5alpha-androstan-3,17-dione + NADH + H(+). It carries out the reaction 5alpha-androstane-3alpha,17beta-diol + NAD(+) = 17beta-hydroxy-5alpha-androstan-3-one + NADH + H(+). It participates in cofactor metabolism; retinol metabolism. With respect to regulation, inhibited by 9-cis-, 13-cis- and all-trans-retinoic acids, with the most potent inhibitor being 13-cis-retinoic acid. Weakly inhibited by oleic acid. In terms of biological role, catalyzes the oxidation of cis-isomers of retinol, including 11-cis-, 9-cis-, and 13-cis-retinol in an NAD-dependent manner. Has no activity towards all-trans retinal. Plays a significant role in 11-cis retinol oxidation in the retinal pigment epithelium cells (RPE). Also recognizes steroids (androsterone, androstanediol) as its substrates. The chain is Retinol dehydrogenase 5 from Homo sapiens (Human).